A 115-amino-acid polypeptide reads, in one-letter code: UPF0212 protein MJ0068 (115 aa).

It belongs to the UPF0212 family.

The sequence is that of UPF0212 protein MJ0068 from Methanocaldococcus jannaschii (strain ATCC 43067 / DSM 2661 / JAL-1 / JCM 10045 / NBRC 100440) (Methanococcus jannaschii).